The following is a 376-amino-acid chain: MAKQDYYEILGVSKTAEEREIRKAYKRLAMKYHPDRNQGDKEAEAKFKEIKEAYEVLTDSQKRAAYDQYGHAAFEQGGMGGGGFGGGADFSDIFGDVFGDIFGGGRGRQRAARGADLRYNMELTLEEAVRGVTKEIRIPTLEECDVCHGSGAKPGTQPQTCPTCHGSGQVQMRQGFFAVQQTCPHCQGRGTLIKDPCNKCHGHGRVERSKTLSVKIPAGVDTGDRIRLAGEGEAGEHGAPAGDLYVQVQVKQHPIFEREGNNLYCEVPINFAMAALGGEIEVPTLDGRVKLKVPGETQTGKLFRMRGKGVKSVRGGAQGDLLCRVVVETPVGLNERQKQLLQELQESFGGPTGEHNSPRSKSFFDGVKKFFDDLTR.

One can recognise a J domain in the interval 5 to 70 (DYYEILGVSK…QKRAAYDQYG (66 aa)). The CR-type zinc-finger motif lies at 131–209 (GVTKEIRIPT…CHGHGRVERS (79 aa)). Positions 144, 147, 161, 164, 183, 186, 197, and 200 each coordinate Zn(2+). 4 CXXCXGXG motif repeats span residues 144 to 151 (CDVCHGSG), 161 to 168 (CPTCHGSG), 183 to 190 (CPHCQGRG), and 197 to 204 (CNKCHGHG).

The protein belongs to the DnaJ family. In terms of assembly, homodimer. It depends on Zn(2+) as a cofactor.

It localises to the cytoplasm. Participates actively in the response to hyperosmotic and heat shock by preventing the aggregation of stress-denatured proteins and by disaggregating proteins, also in an autonomous, DnaK-independent fashion. Unfolded proteins bind initially to DnaJ; upon interaction with the DnaJ-bound protein, DnaK hydrolyzes its bound ATP, resulting in the formation of a stable complex. GrpE releases ADP from DnaK; ATP binding to DnaK triggers the release of the substrate protein, thus completing the reaction cycle. Several rounds of ATP-dependent interactions between DnaJ, DnaK and GrpE are required for fully efficient folding. Also involved, together with DnaK and GrpE, in the DNA replication of plasmids through activation of initiation proteins. This Escherichia coli (strain K12 / DH10B) protein is Chaperone protein DnaJ.